A 321-amino-acid polypeptide reads, in one-letter code: Protein ABIL3 (321 aa).

2 disordered regions span residues 179–273 (TIRE…RSAS) and 279–298 (EKEAQKEPEHQQQPSKSKRL). Composition is skewed to low complexity over residues 204 to 215 (SATFSFSSIATA) and 240 to 255 (IRPSSISRPTTPSKSR). The span at 279-288 (EKEAQKEPEH) shows a compositional bias: basic and acidic residues.

Belongs to the ABI family. Binds SCAR.

Its subcellular location is the cytoplasm. It is found in the cytoskeleton. Involved in regulation of actin and microtubule organization. Part of a WAVE complex that activates the Arp2/3 complex. This Arabidopsis thaliana (Mouse-ear cress) protein is Protein ABIL3 (ABIL3).